Reading from the N-terminus, the 456-residue chain is Phosphomethylpyrimidine synthase (456 aa).

Residues Asn80, Met109, Tyr139, His175, 195-197 (SRG), 236-239 (DSLR), and Glu275 contribute to the substrate site. His279 serves as a coordination point for Zn(2+). Position 302 (Tyr302) interacts with substrate. A Zn(2+)-binding site is contributed by His343. [4Fe-4S] cluster-binding residues include Cys423, Cys426, and Cys431.

This sequence belongs to the ThiC family. [4Fe-4S] cluster is required as a cofactor.

It catalyses the reaction 5-amino-1-(5-phospho-beta-D-ribosyl)imidazole + S-adenosyl-L-methionine = 4-amino-2-methyl-5-(phosphooxymethyl)pyrimidine + CO + 5'-deoxyadenosine + formate + L-methionine + 3 H(+). Its pathway is cofactor biosynthesis; thiamine diphosphate biosynthesis. In terms of biological role, catalyzes the synthesis of the hydroxymethylpyrimidine phosphate (HMP-P) moiety of thiamine from aminoimidazole ribotide (AIR) in a radical S-adenosyl-L-methionine (SAM)-dependent reaction. The sequence is that of Phosphomethylpyrimidine synthase from Prochlorococcus marinus (strain MIT 9301).